The primary structure comprises 506 residues: Exopolyphosphatase (506 aa).

Belongs to the GppA/Ppx family. Homodimer. Requires Mg(2+) as cofactor.

The protein localises to the cell membrane. It carries out the reaction [phosphate](n) + H2O = [phosphate](n-1) + phosphate + H(+). The enzyme catalyses [phosphate](n) + ATP = [phosphate](n+1) + ADP. Exopolyphosphatase activity is stimulated by NH(4)(+) and K(+). Phosphotransferase activity is insensitive to the addition of K(+) or NH(4)(+) ions. Functionally, degradation of inorganic polyphosphates (polyP). Releases orthophosphate processively from the ends of the polyP chain. Also has polyphosphate:ADP phosphotransferase activity, catalyzing the production of ATP from ADP and polyP. In Pseudomonas aeruginosa (strain ATCC 15692 / DSM 22644 / CIP 104116 / JCM 14847 / LMG 12228 / 1C / PRS 101 / PAO1), this protein is Exopolyphosphatase.